The sequence spans 89 residues: Large ribosomal subunit protein bL31B (89 aa).

It belongs to the bacterial ribosomal protein bL31 family. Type B subfamily. In terms of assembly, part of the 50S ribosomal subunit.

The sequence is that of Large ribosomal subunit protein bL31B from Aeromonas hydrophila subsp. hydrophila (strain ATCC 7966 / DSM 30187 / BCRC 13018 / CCUG 14551 / JCM 1027 / KCTC 2358 / NCIMB 9240 / NCTC 8049).